The sequence spans 124 residues: uncharacterized protein (124 aa).

Residues 13–33 (IIFMALYFVITGIVIRLIGYS) traverse the membrane as a helical segment.

Its subcellular location is the membrane. This is an uncharacterized protein from Bacillus anthracis.